A 211-amino-acid polypeptide reads, in one-letter code: UPF0637 protein ABC2405 (211 aa).

It belongs to the UPF0637 family.

This chain is UPF0637 protein ABC2405, found in Shouchella clausii (strain KSM-K16) (Alkalihalobacillus clausii).